The following is a 366-amino-acid chain: N-acetyl-L-citrulline deacetylase (366 aa).

Positions 72 and 103 each coordinate Co(2+). The active-site Proton donor/acceptor is E130. E155 provides a ligand contact to Co(2+).

This sequence belongs to the peptidase M20A family. N-acetylcitrulline deacetylase subfamily. As to quaternary structure, forms homodimers in the crystal, but higher order oligomers may form in solution. It depends on Co(2+) as a cofactor.

The enzyme catalyses N(2)-acetyl-L-citrulline + H2O = L-citrulline + acetate. It catalyses the reaction N(2)-acetyl-L-ornithine + H2O = L-ornithine + acetate. The protein operates within amino-acid biosynthesis; L-arginine biosynthesis. Its function is as follows. Catalyzes the deacetylation of N-acetyl-L-citrulline to produce L-citrulline. This is a step in an alternative arginine biosynthesis pathway. Is also able to catalyze the deacetylation of N-acetylornithine in vitro, with almost equal velocity. However, this reaction may be not relevant in vivo since Xanthomonas does not possess the canonical argF gene and cannot convert ornithine to citrulline via ArgF'. This chain is N-acetyl-L-citrulline deacetylase, found in Xanthomonas campestris pv. campestris (strain ATCC 33913 / DSM 3586 / NCPPB 528 / LMG 568 / P 25).